We begin with the raw amino-acid sequence, 454 residues long: COBRA-like protein 6 (454 aa).

The signal sequence occupies residues 1–24; that stretch reads MGAMLNLLLVVTVILCSILSPTRF. Residues Asn-104, Asn-191, Asn-320, Asn-355, and Asn-391 are each glycosylated (N-linked (GlcNAc...) asparagine). Residue Ser-429 is the site of GPI-anchor amidated serine attachment. The propeptide at 430–454 is removed in mature form; it reads SSSSAVISSVSVVFCFLLHHLLLLV.

This sequence belongs to the COBRA family. As to expression, expressed in flowers and siliques.

Its subcellular location is the cell membrane. This is COBRA-like protein 6 (COBL6) from Arabidopsis thaliana (Mouse-ear cress).